Reading from the N-terminus, the 115-residue chain is MSEYKQCIVTRDDLKLSKGKFAVQVAHAALSAAEWASKSDLEKWKEGGQKKIVLRVPTIKDLYELKEKARREGLPTALIQDAGLTEIPAGTVTVLGIGPAKEEVIDKVTRDLKLV.

It belongs to the PTH2 family.

It localises to the cytoplasm. It carries out the reaction an N-acyl-L-alpha-aminoacyl-tRNA + H2O = an N-acyl-L-amino acid + a tRNA + H(+). Functionally, the natural substrate for this enzyme may be peptidyl-tRNAs which drop off the ribosome during protein synthesis. This chain is Peptidyl-tRNA hydrolase, found in Methanosarcina acetivorans (strain ATCC 35395 / DSM 2834 / JCM 12185 / C2A).